Here is an 819-residue protein sequence, read N- to C-terminus: Molybdenum cofactor sulfurase (819 aa).

Lysine 271 is subject to N6-(pyridoxal phosphate)lysine. Cysteine 430 is an active-site residue. An MOSC domain is found at 650-817 (CKLLRYSSST…IGVGEEVNPD (168 aa)).

It belongs to the class-V pyridoxal-phosphate-dependent aminotransferase family. MOCOS subfamily. The cofactor is pyridoxal 5'-phosphate. Ubiquitously expressed.

It catalyses the reaction Mo-molybdopterin + L-cysteine + AH2 = thio-Mo-molybdopterin + L-alanine + A + H2O. It functions in the pathway cofactor biosynthesis; molybdopterin biosynthesis. Sulfurates the molybdenum cofactor. Sulfation of molybdenum is essential for xanthine dehydrogenase (XDH) and aldehyde oxidase (ADO) enzymes in which molybdenum cofactor is liganded by 1 oxygen and 1 sulfur atom in active form. Modulates cold stress- and osmotic stress-responsive gene expression by acting as key regulator of abscisic acid (ABA) biosynthesis. In Arabidopsis thaliana (Mouse-ear cress), this protein is Molybdenum cofactor sulfurase (ABA3).